Here is a 496-residue protein sequence, read N- to C-terminus: COP9 signalosome complex subunit 3 (496 aa).

The 169-residue stretch at 243 to 411 folds into the PCI domain; sequence QASHCLGIVI…GNETTTMLRF (169 aa). Positions 468-496 are disordered; sequence GSSERSGVVGSTEADGGGDLDEDLMGDGR. A compositionally biased stretch (acidic residues) spans 483–496; it reads GGGDLDEDLMGDGR.

Belongs to the CSN3 family. In terms of assembly, component of the COP9 signalosome (CSN) complex.

Its subcellular location is the cytoplasm. The protein localises to the nucleus. Component of the COP9 signalosome (CSN) complex that acts as an regulator of the ubiquitin (Ubl) conjugation pathway by mediating the deneddylation of the cullin subunit of SCF-type E3 ubiquitin-protein ligase complexes. The CSN complex seems to link protein degradation to sexual development. The chain is COP9 signalosome complex subunit 3 (csnC) from Emericella nidulans (strain FGSC A4 / ATCC 38163 / CBS 112.46 / NRRL 194 / M139) (Aspergillus nidulans).